Consider the following 797-residue polypeptide: Inactive deaminase YBR284W (797 aa).

The helical transmembrane segment at 627–647 threads the bilayer; that stretch reads LVYLFYLSQIPMVVAPLNSIV.

Belongs to the metallo-dependent hydrolases superfamily. Adenosine and AMP deaminases family.

The protein resides in the membrane. The protein is Inactive deaminase YBR284W of Saccharomyces cerevisiae (strain ATCC 204508 / S288c) (Baker's yeast).